The following is a 251-amino-acid chain: Ditrans,polycis-undecaprenyl-diphosphate synthase ((2E,6E)-farnesyl-diphosphate specific) (251 aa).

Asp29 is a catalytic residue. Mg(2+) is bound at residue Asp29. Substrate contacts are provided by residues 30–33 (GNGK), Trp34, Arg42, His46, and 74–76 (SSD). Residue Asn77 is the Proton acceptor of the active site. Substrate-binding positions include Trp78, Arg80, Arg197, and 203-205 (RLS). Glu216 lines the Mg(2+) pocket.

Belongs to the UPP synthase family. Homodimer. Mg(2+) is required as a cofactor.

The enzyme catalyses 8 isopentenyl diphosphate + (2E,6E)-farnesyl diphosphate = di-trans,octa-cis-undecaprenyl diphosphate + 8 diphosphate. In terms of biological role, catalyzes the sequential condensation of isopentenyl diphosphate (IPP) with (2E,6E)-farnesyl diphosphate (E,E-FPP) to yield (2Z,6Z,10Z,14Z,18Z,22Z,26Z,30Z,34E,38E)-undecaprenyl diphosphate (di-trans,octa-cis-UPP). UPP is the precursor of glycosyl carrier lipid in the biosynthesis of bacterial cell wall polysaccharide components such as peptidoglycan and lipopolysaccharide. The protein is Ditrans,polycis-undecaprenyl-diphosphate synthase ((2E,6E)-farnesyl-diphosphate specific) of Buchnera aphidicola subsp. Baizongia pistaciae (strain Bp).